Consider the following 235-residue polypeptide: Caffeoyl-CoA O-methyltransferase (235 aa).

Lys-8 is a substrate binding site. Residues Val-52, Glu-74, 76 to 77, Ser-82, Asp-100, and Ala-129 each bind S-adenosyl-L-methionine; that span reads GV. Position 151 (Asp-151) interacts with substrate. Asp-151 contributes to the a divalent metal cation binding site. Asp-153 provides a ligand contact to S-adenosyl-L-methionine. A divalent metal cation is bound by residues Asp-177 and Asn-178.

It belongs to the class I-like SAM-binding methyltransferase superfamily. Cation-dependent O-methyltransferase family. CCoAMT subfamily. A divalent metal cation is required as a cofactor.

The catalysed reaction is (E)-caffeoyl-CoA + S-adenosyl-L-methionine = (E)-feruloyl-CoA + S-adenosyl-L-homocysteine + H(+). It functions in the pathway aromatic compound metabolism; phenylpropanoid biosynthesis. Functionally, methylates caffeoyl-CoA to feruloyl-CoA and 5-hydroxyferuloyl-CoA to sinapoyl-CoA. Plays a role in the synthesis of feruloylated polysaccharides. Involved in the reinforcement of the plant cell wall. Also involved in the responding to wounding or pathogen challenge by the increased formation of cell wall-bound ferulic acid polymers. This Populus kitakamiensis (Aspen) protein is Caffeoyl-CoA O-methyltransferase.